The following is a 493-amino-acid chain: MSELTSLTIAEARRKLRAKEITALELTEAYISAIDAANGHLNAYIKVTPDLARLMAKNSDERIAAGKAGDLEGIPLGIKDLFATVGVHTQACSHILDGFEPRYESTVTQNLWDDGAVMLGKLNMDEFAMGSSNETSHYGAVINPWRAAGSNQQLVPGGSSGGSAAAVAAHLCAGATATDTGGSIRQPAAFTGTVGIKPTYGRCSRWGTVAFASSLDQAGPIARDVRDAAILLKSMASVDAKDTTSVDLPVPDYEAALGQSLKGMKIGIPSEYRVDGMPEEIETLWRQGIAWLKDAGAEIVDISLPHTKYALPAYYIVAPAEASSNLARYDGVRYGLRVDGKDIVDMYEKTRAAGFGKEVKRRIMIGTYVLSAGYYDAYYIRAQKVRTLIKRDFELAFNAGVDAILTPATPSSAFGVADENLASDPVKMYLNDIFTVTVNMAGLPGIAVPAGLDQKGLPLGLQLIGKPFDEETLFKTAHVIEQAAGRFTPARWW.

Residues Lys-79 and Ser-159 each act as charge relay system in the active site. Residue Ser-183 is the Acyl-ester intermediate of the active site.

Belongs to the amidase family. GatA subfamily. As to quaternary structure, heterotrimer of A, B and C subunits.

The catalysed reaction is L-glutamyl-tRNA(Gln) + L-glutamine + ATP + H2O = L-glutaminyl-tRNA(Gln) + L-glutamate + ADP + phosphate + H(+). Its function is as follows. Allows the formation of correctly charged Gln-tRNA(Gln) through the transamidation of misacylated Glu-tRNA(Gln) in organisms which lack glutaminyl-tRNA synthetase. The reaction takes place in the presence of glutamine and ATP through an activated gamma-phospho-Glu-tRNA(Gln). This chain is Glutamyl-tRNA(Gln) amidotransferase subunit A, found in Rhizobium leguminosarum bv. trifolii (strain WSM2304).